A 206-amino-acid polypeptide reads, in one-letter code: Cytochrome b-245 chaperone 1 homolog (206 aa).

Residues 21–43 (GIRSWSILVGIASVGLAAAYYSS) form a helical membrane-spanning segment. The tract at residues 172 to 206 (ADDDYPDDDDGIEDLGLGDSSDSQDDPDGDDDEEH) is disordered. Composition is skewed to acidic residues over residues 174-184 (DDYPDDDDGIE) and 193-206 (DSQD…DEEH).

It belongs to the CYBC1 family.

The protein localises to the endoplasmic reticulum membrane. Its function is as follows. Functions as a chaperone necessary for a stable expression of the CYBA and CYBB subunits of the cytochrome b-245 heterodimer. The sequence is that of Cytochrome b-245 chaperone 1 homolog from Danio rerio (Zebrafish).